Reading from the N-terminus, the 1362-residue chain is Mediator of RNA polymerase II transcription subunit 12 (1362 aa).

Residues 31-51 (LRPPDDIHPLVDPARIGDSVY) are disordered.

This sequence belongs to the Mediator complex subunit 12 family. As to quaternary structure, component of the SRB8-11 complex, which itself associates with the Mediator complex.

The protein resides in the nucleus. In terms of biological role, component of the SRB8-11 complex. The SRB8-11 complex is a regulatory module of the Mediator complex which is itself involved in regulation of basal and activated RNA polymerase II-dependent transcription. The SRB8-11 complex may be involved in the transcriptional repression of a subset of genes regulated by Mediator. It may inhibit the association of the Mediator complex with RNA polymerase II to form the holoenzyme complex. This is Mediator of RNA polymerase II transcription subunit 12 (SRB8) from Yarrowia lipolytica (strain CLIB 122 / E 150) (Yeast).